The chain runs to 211 residues: Octanoyltransferase (211 aa).

Positions 28–203 (GSAPETLLLV…HFQSLLKTWL (176 aa)) constitute a BPL/LPL catalytic domain. Substrate-binding positions include 66–73 (RGGDITYH), 133–135 (SIG), and 146–148 (GFA). Catalysis depends on Cys164, which acts as the Acyl-thioester intermediate.

The protein belongs to the LipB family.

The protein localises to the cytoplasm. It carries out the reaction octanoyl-[ACP] + L-lysyl-[protein] = N(6)-octanoyl-L-lysyl-[protein] + holo-[ACP] + H(+). It participates in protein modification; protein lipoylation via endogenous pathway; protein N(6)-(lipoyl)lysine from octanoyl-[acyl-carrier-protein]: step 1/2. In terms of biological role, catalyzes the transfer of endogenously produced octanoic acid from octanoyl-acyl-carrier-protein onto the lipoyl domains of lipoate-dependent enzymes. Lipoyl-ACP can also act as a substrate although octanoyl-ACP is likely to be the physiological substrate. The polypeptide is Octanoyltransferase (Syntrophotalea carbinolica (strain DSM 2380 / NBRC 103641 / GraBd1) (Pelobacter carbinolicus)).